The primary structure comprises 219 residues: Ribosomal RNA small subunit methyltransferase Nep1 (219 aa).

S-adenosyl-L-methionine-binding positions include Gly-178, Gly-183, and 196–201 (LYKAPL).

Belongs to the class IV-like SAM-binding methyltransferase superfamily. RNA methyltransferase NEP1 family. In terms of assembly, homodimer.

The enzyme catalyses a pseudouridine in rRNA + S-adenosyl-L-methionine = an N(1)-methylpseudouridine in rRNA + S-adenosyl-L-homocysteine + H(+). In terms of biological role, methyltransferase involved in ribosomal biogenesis. Specifically catalyzes the N1-methylation of the pseudouridine corresponding to position 914 in M.jannaschii 16S rRNA. This Thermococcus onnurineus (strain NA1) protein is Ribosomal RNA small subunit methyltransferase Nep1.